The sequence spans 409 residues: MWTSWWLWPLVAVCAADQFRDLAVRIMQDTPVIDGHNDLPWQLLNLFNNQLQDPGANLSSLAHTHTNIPKLKAGFVGGQFWSAYVPCDTQNRDAVKRTLEQIDVIQRMCQAYPETFACVTSSTGIRQAFREGKVASLVGVEGGHSIDSSLGVLRALYHLGMRYMTLTHSCNTPWADNWLVDTGDDKAQSQGLSHFGQSVVKEMNRLGVMIDLAHVSVATMRAALKLSQAPVIFSHSSAYSLCPHRRNVPDDVLQLVKETGSLVMVNFYNDYVSCSAKANLSQVADHLDHIKKVAGAAAVGFGGDYDGVSRVPSGLEDVSKYPDLVAELLRRQWTEAEVRGALADNLLRVFEAVEQASNHAQVPGEEPIPLGQLEASCRTNYGYSAAPSLHLPPGSLLASLVPLLLLSLP.

An N-terminal signal peptide occupies residues 1 to 16; that stretch reads MWTSWWLWPLVAVCAA. Residues His-36 and Asp-38 each coordinate Zn(2+). An N-linked (GlcNAc...) asparagine glycan is attached at Asn-57. A disulfide bond links Cys-87 and Cys-170. Residue Glu-141 participates in Zn(2+) binding. His-168 is a substrate binding site. Zn(2+) is bound by residues His-214 and His-235. Residues Cys-242 and Cys-274 are joined by a disulfide bond. Residue Arg-246 coordinates substrate. A glycan (N-linked (GlcNAc...) asparagine) is linked at Asn-279. Asp-304 is a binding site for substrate. Ser-384 carries the GPI-anchor amidated serine lipid modification. Residues 385 to 409 constitute a propeptide, removed in mature form; it reads AAPSLHLPPGSLLASLVPLLLLSLP.

This sequence belongs to the metallo-dependent hydrolases superfamily. Peptidase M19 family. Homodimer; disulfide-linked. Zn(2+) serves as cofactor.

It localises to the apical cell membrane. The protein resides in the cell projection. It is found in the microvillus membrane. Its subcellular location is the cell membrane. The enzyme catalyses an L-aminoacyl-L-amino acid + H2O = 2 an L-alpha-amino acid. It carries out the reaction leukotriene D4 + H2O = leukotriene E4 + glycine. The catalysed reaction is L-cystine-bis-glycine + 2 H2O = L-cystine + 2 glycine. It catalyses the reaction a beta-lactam + H2O = a substituted beta-amino acid. The enzyme catalyses glycyldehydrophenylalanine + H2O = 2,3-didehydrophenylalanine + glycine. Inhibited by L-penicillamine. Inhibited by cilastatin. In terms of biological role, hydrolyzes a wide range of dipeptides. Hydrolyzes the conversion of leukotriene D4 to leukotriene E4. Hydrolyzes cystinyl-bis-glycine (cys-bis-gly) formed during glutathione degradation. Also possesses beta lactamase activity and hydrolytically inactivates beta-lactam antibiotics. Functionally, independently of its dipeptidase activity, acts as an adhesion receptor for neutrophil recruitment from bloodstream into inflamed lungs and liver. The polypeptide is Dipeptidase 1 (DPEP1) (Sus scrofa (Pig)).